Consider the following 258-residue polypeptide: Ribosomal RNA large subunit methyltransferase E (258 aa).

The S-adenosyl-L-methionine site is built by Gly-58, Trp-60, Asp-78, Asp-96, and Asp-120. Residue Lys-160 is the Proton acceptor of the active site.

Belongs to the class I-like SAM-binding methyltransferase superfamily. RNA methyltransferase RlmE family.

The protein localises to the cytoplasm. The enzyme catalyses uridine(2552) in 23S rRNA + S-adenosyl-L-methionine = 2'-O-methyluridine(2552) in 23S rRNA + S-adenosyl-L-homocysteine + H(+). Specifically methylates the uridine in position 2552 of 23S rRNA at the 2'-O position of the ribose in the fully assembled 50S ribosomal subunit. The protein is Ribosomal RNA large subunit methyltransferase E of Methanococcus maripaludis (strain DSM 14266 / JCM 13030 / NBRC 101832 / S2 / LL).